Consider the following 296-residue polypeptide: NH(3)-dependent NAD(+) synthetase (296 aa).

30-37 contributes to the ATP binding site; that stretch reads GVSGGLDS. D36 is a Mg(2+) binding site. R157 provides a ligand contact to deamido-NAD(+). E182 is a Mg(2+) binding site. Deamido-NAD(+)-binding residues include K190 and D197. K206 and S228 together coordinate ATP.

The protein belongs to the NAD synthetase family. In terms of assembly, homodimer.

It catalyses the reaction deamido-NAD(+) + NH4(+) + ATP = AMP + diphosphate + NAD(+) + H(+). Its pathway is cofactor biosynthesis; NAD(+) biosynthesis; NAD(+) from deamido-NAD(+) (ammonia route): step 1/1. Its function is as follows. Catalyzes the ATP-dependent amidation of deamido-NAD to form NAD. Uses ammonia as a nitrogen source. This chain is NH(3)-dependent NAD(+) synthetase, found in Coprothermobacter proteolyticus (strain ATCC 35245 / DSM 5265 / OCM 4 / BT).